A 33-amino-acid polypeptide reads, in one-letter code: Neutrophil defensin 4 (33 aa).

Disulfide bonds link Cys-3–Cys-31, Cys-5–Cys-20, and Cys-10–Cys-30.

Belongs to the alpha-defensin family. HANP-2 could be a product of proteolytic N-terminal amino acid removal from HANP-4.

It localises to the secreted. Bactericidal activity, greater against Gram-positive bacteria. Low anti-fungi activity. The sequence is that of Neutrophil defensin 4 from Mesocricetus auratus (Golden hamster).